The sequence spans 451 residues: Trigger factor (451 aa).

Residues 173 to 258 (GDRVTVDFVG…LKKVEWAHLP (86 aa)) enclose the PPIase FKBP-type domain.

It belongs to the FKBP-type PPIase family. Tig subfamily.

It is found in the cytoplasm. The catalysed reaction is [protein]-peptidylproline (omega=180) = [protein]-peptidylproline (omega=0). Involved in protein export. Acts as a chaperone by maintaining the newly synthesized protein in an open conformation. Functions as a peptidyl-prolyl cis-trans isomerase. This Cupriavidus taiwanensis (strain DSM 17343 / BCRC 17206 / CCUG 44338 / CIP 107171 / LMG 19424 / R1) (Ralstonia taiwanensis (strain LMG 19424)) protein is Trigger factor.